The chain runs to 220 residues: Glycerol-3-phosphate acyltransferase (220 aa).

6 helical membrane passes run 11–31 (INVI…GYAL), 70–90 (LLVL…SKLF), 96–116 (LQWM…FLNF), 127–147 (GSVV…WFFV), 153–173 (ISSL…FFVP), and 192–212 (PMVL…FNLL).

This sequence belongs to the PlsY family. As to quaternary structure, probably interacts with PlsX.

The protein resides in the cell inner membrane. The enzyme catalyses an acyl phosphate + sn-glycerol 3-phosphate = a 1-acyl-sn-glycero-3-phosphate + phosphate. It participates in lipid metabolism; phospholipid metabolism. Functionally, catalyzes the transfer of an acyl group from acyl-phosphate (acyl-PO(4)) to glycerol-3-phosphate (G3P) to form lysophosphatidic acid (LPA). This enzyme utilizes acyl-phosphate as fatty acyl donor, but not acyl-CoA or acyl-ACP. The protein is Glycerol-3-phosphate acyltransferase of Helicobacter pylori (strain J99 / ATCC 700824) (Campylobacter pylori J99).